The primary structure comprises 603 residues: Coagulation factor XII (603 aa).

An N-terminal signal peptide occupies residues 1 to 18 (GRLLLGSLLVSLESALSA). A Fibronectin type-II domain is found at 41-89 (VTGEPCYFPFQYNRQLYHHCIHKGRPGPRPWCATTPNFDQDQQWAYCLE). 20 cysteine pairs are disulfide-bonded: C46-C72, C60-C87, C97-C109, C103-C118, C120-C129, C134-C162, C160-C169, C177-C188, C182-C197, C199-C208, C216-C294, C237-C276, C265-C289, C345-C472, C383-C399, C391-C461, C422-C425, C488-C557, C520-C536, and C547-C578. In terms of domain architecture, EGF-like 1 spans 93 to 130 (VKDHCSKHNPCQRGGICVNTLSSPHCLCPDHLTGKHCQ). The Fibronectin type-I domain maps to 132-172 (EKCFEPQLHRFFHENEIWFRTGPAGVAKCHCKGPDAHCKQM). In terms of domain architecture, EGF-like 2 spans 173–209 (HSQECQTNPCLNGGRCLEVEGHHLCDCPMGYTGPFCD). Residues 216–294 (CYEGRGVSYR…SWEYCDLAQC (79 aa)) form the Kringle domain. 2 N-linked (GlcNAc...) asparagine glycosylation sites follow: N248 and N270. The 244-residue stretch at 359 to 602 (IVGGLVALPG…YLTWIQKHTA (244 aa)) folds into the Peptidase S1 domain. H398 (charge relay system) is an active-site residue. N419 is a glycosylation site (N-linked (GlcNAc...) asparagine). The active-site Charge relay system is D447. S551 functions as the Charge relay system in the catalytic mechanism.

This sequence belongs to the peptidase S1 family. As to quaternary structure, interacts with HRG; the interaction, which is enhanced in the presence of zinc ions and inhibited by heparin-binding, inhibits factor XII autoactivation and contact-initiated coagulation. Post-translationally, O- and N-glycosylated.

The protein resides in the secreted. The catalysed reaction is Selective cleavage of Arg-|-Ile bonds in factor VII to form factor VIIa and factor XI to form factor XIa.. Its activity is regulated as follows. Activity is promoted in the presence of negatively charged surfaces. Functionally, factor XII is a serum glycoprotein that participates in the initiation of blood coagulation, fibrinolysis, and the generation of bradykinin and angiotensin. Prekallikrein is cleaved by factor XII to form kallikrein, which then cleaves factor XII first to alpha-factor XIIa and then trypsin cleaves it to beta-factor XIIa. Alpha-factor XIIa activates factor XI to factor XIa. The protein is Coagulation factor XII (F12) of Cavia porcellus (Guinea pig).